A 348-amino-acid polypeptide reads, in one-letter code: S-adenosylmethionine:tRNA ribosyltransferase-isomerase (348 aa).

It belongs to the QueA family. As to quaternary structure, monomer.

It localises to the cytoplasm. It carries out the reaction 7-aminomethyl-7-carbaguanosine(34) in tRNA + S-adenosyl-L-methionine = epoxyqueuosine(34) in tRNA + adenine + L-methionine + 2 H(+). It participates in tRNA modification; tRNA-queuosine biosynthesis. Transfers and isomerizes the ribose moiety from AdoMet to the 7-aminomethyl group of 7-deazaguanine (preQ1-tRNA) to give epoxyqueuosine (oQ-tRNA). In Tolumonas auensis (strain DSM 9187 / NBRC 110442 / TA 4), this protein is S-adenosylmethionine:tRNA ribosyltransferase-isomerase.